The following is a 1045-amino-acid chain: Elongation factor 3 (1045 aa).

HEAT repeat units follow at residues 5-42, 43-85, 86-123, 125-162, 166-203, 205-241, and 242-279; these read DQSL…GNII, EHDI…PSVE, PFVI…AINP, AIKA…AAKE, LRMP…TVDN, DIER…EVTP, and ATLS…LVED. Residues Ile42, His44, and Ser83 each coordinate ADP. ADP contacts are provided by Thr392, His396, and Glu397. 2 consecutive ABC transporter domains span residues 426–641 and 667–993; these read DEGE…YYEL and VKVS…KKED. Residues Asn703, Glu922, Asn925, and His951 each coordinate ADP. The tract at residues 974 to 1045 is disordered; the sequence is SGHNWVSGQG…AYVSSDDEDF (72 aa). A compositionally biased stretch (basic residues) spans 1007 to 1031; sequence GGKKKKKLSSAELRKKKKERMKKKK.

Belongs to the ABC transporter superfamily. ABCF family. EF3 subfamily. In terms of assembly, monomer.

The protein resides in the cytoplasm. Its subcellular location is the cytosol. It carries out the reaction ATP + H2O = ADP + phosphate + H(+). The protein operates within protein biosynthesis; polypeptide chain elongation. Ribosome-dependent ATPase that functions in cytoplasmic translation elongation. Required for the ATP-dependent release of deacylated tRNA from the ribosomal E-site during protein biosynthesis. Stimulates the eEF1A-dependent binding of aminoacyl-tRNA to the ribosomal A-site, which has reduced affinity for tRNA as long as the E-site is occupied. Assists translation termination by stimulating the release of nascent protein from the ribosome by release factors. The sequence is that of Elongation factor 3 (TEF3) from Candida glabrata (strain ATCC 2001 / BCRC 20586 / JCM 3761 / NBRC 0622 / NRRL Y-65 / CBS 138) (Yeast).